A 253-amino-acid polypeptide reads, in one-letter code: NAD-dependent protein deacylase 2 (253 aa).

The region spanning 1–252 (MEDEIRKAAE…VEEVKRLRSE (252 aa)) is the Deacetylase sirtuin-type domain. NAD(+)-binding positions include 23 to 42 (GAGI…DGLW) and 100 to 103 (QNID). Histidine 118 functions as the Proton acceptor in the catalytic mechanism. 4 residues coordinate Zn(2+): cysteine 126, cysteine 129, cysteine 150, and cysteine 153. NAD(+) contacts are provided by residues 191–193 (GSS), 217–219 (NAE), and alanine 235.

This sequence belongs to the sirtuin family. Class III subfamily. Zn(2+) is required as a cofactor.

The protein localises to the cytoplasm. It carries out the reaction N(6)-acetyl-L-lysyl-[protein] + NAD(+) + H2O = 2''-O-acetyl-ADP-D-ribose + nicotinamide + L-lysyl-[protein]. Functionally, NAD-dependent protein deacetylase which modulates the activities of several proteins which are inactive in their acetylated form. Deacetylates the N-terminal lysine residue of Alba, the major archaeal chromatin protein and that, in turn, increases Alba's DNA binding affinity, thereby repressing transcription. This is NAD-dependent protein deacylase 2 from Archaeoglobus fulgidus (strain ATCC 49558 / DSM 4304 / JCM 9628 / NBRC 100126 / VC-16).